The sequence spans 730 residues: Elongation factor 2 (730 aa).

In terms of domain architecture, tr-type G spans Glu-19 to Leu-260. Residues Ala-28–Thr-35, Asp-94–His-98, and Asn-148–Asp-151 each bind GTP. His-596 bears the Diphthamide mark.

This sequence belongs to the TRAFAC class translation factor GTPase superfamily. Classic translation factor GTPase family. EF-G/EF-2 subfamily.

It localises to the cytoplasm. Catalyzes the GTP-dependent ribosomal translocation step during translation elongation. During this step, the ribosome changes from the pre-translocational (PRE) to the post-translocational (POST) state as the newly formed A-site-bound peptidyl-tRNA and P-site-bound deacylated tRNA move to the P and E sites, respectively. Catalyzes the coordinated movement of the two tRNA molecules, the mRNA and conformational changes in the ribosome. This chain is Elongation factor 2 (fusA), found in Methanosarcina thermophila.